We begin with the raw amino-acid sequence, 188 residues long: Elongation factor P-like protein (188 aa).

Belongs to the elongation factor P family.

The protein is Elongation factor P-like protein of Xanthomonas oryzae pv. oryzae (strain MAFF 311018).